Consider the following 146-residue polypeptide: Anti-sigma F factor (146 aa).

The protein belongs to the anti-sigma-factor family.

The enzyme catalyses L-seryl-[protein] + ATP = O-phospho-L-seryl-[protein] + ADP + H(+). It catalyses the reaction L-threonyl-[protein] + ATP = O-phospho-L-threonyl-[protein] + ADP + H(+). In terms of biological role, binds to sigma F and blocks its ability to form an RNA polymerase holoenzyme (E-sigma F). Phosphorylates SpoIIAA on a serine residue. This phosphorylation may enable SpoIIAA to act as an anti-anti-sigma factor that counteracts SpoIIAB and thus releases sigma F from inhibition. In Bacillus cytotoxicus (strain DSM 22905 / CIP 110041 / 391-98 / NVH 391-98), this protein is Anti-sigma F factor.